A 218-amino-acid chain; its full sequence is Cytidylate kinase (218 aa).

10-18 (GPAGSGKST) provides a ligand contact to ATP.

The protein belongs to the cytidylate kinase family. Type 1 subfamily.

It localises to the cytoplasm. It carries out the reaction CMP + ATP = CDP + ADP. The catalysed reaction is dCMP + ATP = dCDP + ADP. The sequence is that of Cytidylate kinase from Fusobacterium nucleatum subsp. nucleatum (strain ATCC 25586 / DSM 15643 / BCRC 10681 / CIP 101130 / JCM 8532 / KCTC 2640 / LMG 13131 / VPI 4355).